A 540-amino-acid chain; its full sequence is Zona pellucida sperm-binding protein 4 (540 aa).

The signal sequence occupies residues 1 to 18; that stretch reads MWLLRCVLLCVSLSLAVS. The Extracellular portion of the chain corresponds to 19 to 505; that stretch reads GQHKPEAPDY…EKLRVPVDSK (487 aa). An N-linked (GlcNAc...) asparagine glycan is attached at N69. The 43-residue stretch at 141–183 folds into the P-type domain; the sequence is DWCDSIPARDRLPCAPSPISRGDCEGLGCCYSSEEVNSCYYGN. A ZP domain is found at 188 to 466; sequence HCTREGHFSI…VTCPDLSRRR (279 aa). N202, N219, and N267 each carry an N-linked (GlcNAc...) asparagine glycan. Residue T302 is glycosylated (O-linked (GalNAc...) threonine). C367 and C442 are joined by a disulfide. A propeptide spans 463–540 (removed in mature form); sequence SRRRNFDNSS…QKSCPDQMCQ (78 aa). Residues N470 and N474 are each glycosylated (N-linked (GlcNAc...) asparagine). Residues 506–526 form a helical membrane-spanning segment; the sequence is VLWVAGLSGTLILGALLVSYL. Residues 527–540 lie on the Cytoplasmic side of the membrane; sequence AVKKQKSCPDQMCQ.

The protein belongs to the ZP domain family. ZPB subfamily. Proteolytically cleaved before the transmembrane segment to yield the secreted ectodomain incorporated in the zona pellucida. As to expression, expressed in oocytes.

The protein localises to the zona pellucida. It is found in the cell membrane. Its function is as follows. Component of the zona pellucida, an extracellular matrix surrounding oocytes which mediates sperm binding, induction of the acrosome reaction and prevents post-fertilization polyspermy. The zona pellucida is composed of 3 to 4 glycoproteins, ZP1, ZP2, ZP3, and ZP4. ZP4 may act as a sperm receptor. This chain is Zona pellucida sperm-binding protein 4 (ZP4), found in Homo sapiens (Human).